Here is a 308-residue protein sequence, read N- to C-terminus: Ribosomal RNA small subunit methyltransferase H (308 aa).

S-adenosyl-L-methionine contacts are provided by residues 31 to 33 (GGH), D51, F75, D97, and Q104.

The protein belongs to the methyltransferase superfamily. RsmH family.

It localises to the cytoplasm. It catalyses the reaction cytidine(1402) in 16S rRNA + S-adenosyl-L-methionine = N(4)-methylcytidine(1402) in 16S rRNA + S-adenosyl-L-homocysteine + H(+). Specifically methylates the N4 position of cytidine in position 1402 (C1402) of 16S rRNA. The protein is Ribosomal RNA small subunit methyltransferase H of Tolumonas auensis (strain DSM 9187 / NBRC 110442 / TA 4).